A 240-amino-acid chain; its full sequence is Eukaryotic translation initiation factor 3 subunit K (240 aa).

The region spanning 41 to 221 (YDKDIVLTIL…TIKTRNIDEK (181 aa)) is the PCI domain.

This sequence belongs to the eIF-3 subunit K family. In terms of assembly, component of the eukaryotic translation initiation factor 3 (eIF-3) complex.

The protein localises to the cytoplasm. Component of the eukaryotic translation initiation factor 3 (eIF-3) complex, which is involved in protein synthesis of a specialized repertoire of mRNAs and, together with other initiation factors, stimulates binding of mRNA and methionyl-tRNAi to the 40S ribosome. The eIF-3 complex specifically targets and initiates translation of a subset of mRNAs involved in cell proliferation. This chain is Eukaryotic translation initiation factor 3 subunit K, found in Caenorhabditis briggsae.